A 297-amino-acid chain; its full sequence is Protoheme IX farnesyltransferase (297 aa).

9 consecutive transmembrane segments (helical) span residues 23–43 (VTQLAVFCAVIGMFLAAPGMP), 49–69 (VFGTLGIWLLAAAAFAINCLI), 93–113 (IQVLSLSGLLGGAGMLVLYHL), 117–137 (LTMWLTFATFVGYAIIYTVIL), 144–164 (NIVIGGLSGAMPPALGWAAVA), 171–191 (AWVLVLIIFIWTPPHFWALAL), 215–235 (RLHILLYSFALLATTLLPYAI), 238–258 (SGALYLASALALGGMFVWYAW), and 275–295 (FSILYLALLFGALLIDHWVGL).

Belongs to the UbiA prenyltransferase family. Protoheme IX farnesyltransferase subfamily.

The protein localises to the cell inner membrane. The catalysed reaction is heme b + (2E,6E)-farnesyl diphosphate + H2O = Fe(II)-heme o + diphosphate. It functions in the pathway porphyrin-containing compound metabolism; heme O biosynthesis; heme O from protoheme: step 1/1. Functionally, converts heme B (protoheme IX) to heme O by substitution of the vinyl group on carbon 2 of heme B porphyrin ring with a hydroxyethyl farnesyl side group. In Bordetella pertussis (strain Tohama I / ATCC BAA-589 / NCTC 13251), this protein is Protoheme IX farnesyltransferase.